A 159-amino-acid polypeptide reads, in one-letter code: Protein-export protein SecB (159 aa).

This sequence belongs to the SecB family. As to quaternary structure, homotetramer, a dimer of dimers. One homotetramer interacts with 1 SecA dimer.

The protein resides in the cytoplasm. In terms of biological role, one of the proteins required for the normal export of preproteins out of the cell cytoplasm. It is a molecular chaperone that binds to a subset of precursor proteins, maintaining them in a translocation-competent state. It also specifically binds to its receptor SecA. The protein is Protein-export protein SecB of Nitrosospira multiformis (strain ATCC 25196 / NCIMB 11849 / C 71).